A 106-amino-acid polypeptide reads, in one-letter code: Large ribosomal subunit protein eL42 (106 aa).

The protein belongs to the eukaryotic ribosomal protein eL42 family.

The chain is Large ribosomal subunit protein eL42 (RPL44) from Debaryomyces hansenii (strain ATCC 36239 / CBS 767 / BCRC 21394 / JCM 1990 / NBRC 0083 / IGC 2968) (Yeast).